Reading from the N-terminus, the 404-residue chain is Short chain dehydrogenase sirR (404 aa).

The first 28 residues, 1-28 (MHSKPQRALVIGATGVSGWSLCLQLLQT), serve as a signal peptide directing secretion. NADP(+) contacts are provided by Ser56 and Leu58. Residues Asn67 and Asn157 are each glycosylated (N-linked (GlcNAc...) asparagine). Ser237 functions as the Proton donor in the catalytic mechanism. N-linked (GlcNAc...) asparagine glycosylation occurs at Asn274. Val291 serves as a coordination point for NADP(+).

Belongs to the short-chain dehydrogenases/reductases (SDR) family. Highly divergent.

It functions in the pathway mycotoxin biosynthesis. Short chain dehydrogenase; part of the gene cluster that mediates the biosynthesis of sirodesmin PL, an epipolythiodioxopiperazine (ETP) characterized by a disulfide bridged cyclic dipeptide and that acts as a phytotoxin which is involved in the blackleg didease of canola. SirD catalyzes the O-prenylation of L-tyrosine (L-Tyr) in the presence of dimethylallyl diphosphate (DMAPP) to yield 4-O-dimethylallyl-L-Tyr, and therefore represents probably the first pathway-specific enzyme in the biosynthesis of sirodesmin PL. 4-O-dimethylallyl-L-Tyr, then undergoes condensation with L-Ser in a reaction catalyzed by the non-ribosomal peptide synthase sirP to form the diketopiperazine (DKP) backbone. Further bishydroxylation of the DKP performed by the cytochrome P450 monooxygenase sirC leads to the production of the intermediate phomamide. This step is essential to form the reactive thiol group required for toxicity of sirodesmin PL. The next steps of sirodesmin biosynthesis are not well understood yet, but some predictions could be made from intermediate compounds identification. Phomamide is converted into phomalizarine via oxidation, probably by sirT. Further oxidation, methylation (by sirM or sirN) and reduction steps convert phomalizarine to deacetyl sirodesmin. Finally, acetyltransferase sirH probably acetylates deacetyl sirodesmin to produce sirodesmin PL. This is Short chain dehydrogenase sirR from Leptosphaeria maculans (Blackleg fungus).